Reading from the N-terminus, the 24-residue chain is 60 kDa chaperonin, mitochondrial (24 aa).

Belongs to the chaperonin (HSP60) family. Forms a single seven-member ring complex, in tight association with the p63 protein. Testis.

The protein localises to the mitochondrion. Its function is as follows. Implicated in mitochondrial protein import and macromolecular assembly. May facilitate the correct folding of imported proteins. May also prevent misfolding and promote the refolding and proper assembly of unfolded polypeptides generated under stress conditions in the mitochondrial matrix. The protein is 60 kDa chaperonin, mitochondrial of Heliothis virescens (Tobacco budworm moth).